The following is a 475-amino-acid chain: Rho GTPase-activating protein 15 (475 aa).

Residues 1-22 (MERSTTSDTASEKPNPSHSTGA) are disordered. A PH domain is found at 80-190 (VVEKEGYLLK…WFHAIKNAID (111 aa)). Residues 281–470 (SHLHLVCEHE…LMLSEYSKIF (190 aa)) enclose the Rho-GAP domain.

The protein resides in the cytoplasm. Its subcellular location is the membrane. GTPase activator for the Rho-type GTPases by converting them to an inactive GDP-bound state. In Gallus gallus (Chicken), this protein is Rho GTPase-activating protein 15 (ARHGAP15).